Consider the following 1151-residue polypeptide: SCF E3 ubiquitin ligase complex F-box protein GRR1 (1151 aa).

The segment covering 1-18 (MDQDNNNHNDSNRLHPPD) has biased composition (basic and acidic residues). The segment at 1–72 (MDQDNNNHND…ATSERNASEV (72 aa)) is disordered. The segment covering 38 to 49 (NNNNNNNNNNNN) has biased composition (low complexity). Residues 58 to 72 (RTRETATSERNASEV) show a composition bias toward basic and acidic residues. Phosphoserine is present on residues serine 199 and serine 300. The 48-residue stretch at 314–361 (VFALNMLPSEILHLILDKLNQKYDIVKFLTVSKLWAEIIVKILYYRPH) folds into the F-box domain. 13 LRR repeats span residues 399 to 423 (GDYMHDTELNYFVGCKNLERLTLVF), 424 to 449 (CKHITSVPISAVLRGCKFLQSVDITG), 450 to 475 (IRDVSDDVFDTLATYCPRVQGFYVPQ), 476 to 501 (ARNVTFDSLRNFIVHSPMLKRIKITA), 502 to 527 (NNNMNDELVELLANKCPLLVEVDITL), 528 to 553 (SPNVTDSSLLKLLTRLVQLREFRITH), 554 to 582 (NTNITDNLFQELSKVVDDMPSLRLIDLSG), 583 to 608 (CENITDKTIESIVNLAPKLRNVFLGK), 609 to 634 (CSRITDASLFQLSKLGKNLQTVHFGH), 635 to 660 (CFNITDNGVRALFHSCTRIQYVDFAC), 661 to 685 (CTNLTNRTLYELADLPKLKRIGLVK), 686 to 714 (CTQMTDEGLLNMVSLRGRNDTLERVHLSY), and 715 to 740 (CSNLTIYPIYELLMSCPRLSHLSLTA). Positions 1066–1080 (AGANDTSNNETNNGN) are enriched in low complexity. Disordered regions lie at residues 1066-1090 (AGANDTSNNETNNGNDDNETENPNF) and 1118-1151 (VRNNNNNTIDESMPDTAIDSQMDEASGTPDEDML).

Interacts with SKP1. Component of the probable SCF(GRR1) complex containing CDC53, SKP1, RBX1 and GRR1.

It localises to the membrane. The protein operates within protein modification; protein ubiquitination. In terms of biological role, substrate recognition component of a SCF (SKP1-CUL1-F-box protein) E3 ubiquitin-protein ligase complex which mediates the ubiquitination and subsequent proteasomal degradation of target proteins. Recognizes and directs ubiquitination of phosphorylated CLN1, CLN2 and GIC2. Probably constitutes the primary response element required for the generation or interpretation of the signal that induces glucose repression. In Saccharomyces cerevisiae (strain ATCC 204508 / S288c) (Baker's yeast), this protein is SCF E3 ubiquitin ligase complex F-box protein GRR1 (GRR1).